The sequence spans 554 residues: Undecaprenyl phosphate-alpha-4-amino-4-deoxy-L-arabinose arabinosyl transferase (554 aa).

Helical transmembrane passes span leucine 4 to isoleucine 24, phenylalanine 87 to leucine 107, phenylalanine 115 to valine 135, phenylalanine 178 to isoleucine 198, leucine 206 to leucine 226, tyrosine 262 to leucine 282, glutamate 293 to glycine 313, leucine 315 to threonine 335, isoleucine 352 to valine 372, glutamine 384 to methionine 404, and histidine 410 to proline 430.

This sequence belongs to the glycosyltransferase 83 family.

It localises to the cell inner membrane. It catalyses the reaction 4-amino-4-deoxy-alpha-L-arabinopyranosyl di-trans,octa-cis-undecaprenyl phosphate + lipid IVA = lipid IIA + di-trans,octa-cis-undecaprenyl phosphate.. Its pathway is lipopolysaccharide metabolism; 4-amino-4-deoxy-beta-L-arabinose-lipid A biosynthesis. Catalyzes the transfer of the L-Ara4N moiety of the glycolipid undecaprenyl phosphate-alpha-L-Ara4N to lipid A. The modified arabinose is attached to lipid A and is required for resistance to polymyxin and cationic antimicrobial peptides. The protein is Undecaprenyl phosphate-alpha-4-amino-4-deoxy-L-arabinose arabinosyl transferase of Yersinia enterocolitica serotype O:8 / biotype 1B (strain NCTC 13174 / 8081).